The following is a 267-amino-acid chain: MEKNIQTSRQIWRFQAGEPVRIDDPIAREQPVTLKINGEEFATLVCTPTYLQEMAIGFLVSEGLIQAYEEVKTIWIDDRQGFIHIELVRPIDRLHQHLQTKRYMGSCCGMSRQGFVFASDAKTAKKVQTRDVKLNAGDCFRLMAELQENARTFQQTGGVHNAALATKDGLLLMREDVGRHNALDKLYGHCLQNGLSLHGKLVVFSGRLSAEIILKVAKIGCELVLSKSAPTDRALQIAEELDITTVGFIRNRSMNVYTVPERIELKS.

The Cysteine persulfide intermediate role is filled by cysteine 108.

The protein belongs to the FdhD family.

The protein resides in the cytoplasm. Functionally, required for formate dehydrogenase (FDH) activity. Acts as a sulfur carrier protein that transfers sulfur from IscS to the molybdenum cofactor prior to its insertion into FDH. The sequence is that of Sulfur carrier protein FdhD from Shouchella clausii (strain KSM-K16) (Alkalihalobacillus clausii).